Consider the following 1495-residue polypeptide: DNA-directed RNA polymerase subunit 1 (1495 aa).

The protein belongs to the RNA polymerase beta' chain family.

It localises to the virion. The catalysed reaction is RNA(n) + a ribonucleoside 5'-triphosphate = RNA(n+1) + diphosphate. Functionally, DNA-dependent RNA polymerase catalyzes the transcription of DNA into RNA using the four ribonucleoside triphosphates as substrates. The polypeptide is DNA-directed RNA polymerase subunit 1 (RPO1) (Acanthamoeba polyphaga (Amoeba)).